The following is a 352-amino-acid chain: Large ribosomal subunit protein uL5m (352 aa).

The interval 28–109 (STQTGAGAAA…HPIQSPPSSD (82 aa)) is disordered. Residues 63–80 (EEDKKEFRPWKRAADRKA) are compositionally biased toward basic and acidic residues.

The protein belongs to the universal ribosomal protein uL5 family. Component of the mitochondrial large ribosomal subunit (mt-LSU). Mature N.crassa 74S mitochondrial ribosomes consist of a small (37S) and a large (54S) subunit. The 37S small subunit contains a 16S ribosomal RNA (16S mt-rRNA) and 32 different proteins. The 54S large subunit contains a 23S rRNA (23S mt-rRNA) and 42 different proteins. Unlike bacterial L5, uL5m does not bind zinc.

It is found in the mitochondrion. Component of the mitochondrial ribosome (mitoribosome), a dedicated translation machinery responsible for the synthesis of mitochondrial genome-encoded proteins, including at least some of the essential transmembrane subunits of the mitochondrial respiratory chain. The mitoribosomes are attached to the mitochondrial inner membrane and translation products are cotranslationally integrated into the membrane. The sequence is that of Large ribosomal subunit protein uL5m (mrpl7) from Neurospora crassa (strain ATCC 24698 / 74-OR23-1A / CBS 708.71 / DSM 1257 / FGSC 987).